The sequence spans 169 residues: NADH-quinone oxidoreductase subunit I (169 aa).

4Fe-4S ferredoxin-type domains lie at 60–90 (LRRY…IEAE) and 100–129 (TRYD…EGPN). [4Fe-4S] cluster-binding residues include C70, C73, C76, C80, C109, C112, C115, and C119.

Belongs to the complex I 23 kDa subunit family. As to quaternary structure, NDH-1 is composed of 14 different subunits. Subunits NuoA, H, J, K, L, M, N constitute the membrane sector of the complex. [4Fe-4S] cluster is required as a cofactor.

It is found in the cell membrane. It carries out the reaction a quinone + NADH + 5 H(+)(in) = a quinol + NAD(+) + 4 H(+)(out). Functionally, NDH-1 shuttles electrons from NADH, via FMN and iron-sulfur (Fe-S) centers, to quinones in the respiratory chain. The immediate electron acceptor for the enzyme in this species is believed to be ubiquinone. Couples the redox reaction to proton translocation (for every two electrons transferred, four hydrogen ions are translocated across the cytoplasmic membrane), and thus conserves the redox energy in a proton gradient. The protein is NADH-quinone oxidoreductase subunit I of Wolbachia pipientis wMel.